We begin with the raw amino-acid sequence, 598 residues long: Membrane protein insertase YidC (598 aa).

The chain crosses the membrane as a helical span at residues 7–27 (NYFIAIALSVLIVLGWQFLYM). Residues 37-71 (AQEAQKAQQQTEQVQQPAAGGATPAPASGTAPSGQ) are disordered. A compositionally biased stretch (low complexity) spans 40–71 (AQKAQQQTEQVQQPAAGGATPAPASGTAPSGQ). A run of 4 helical transmembrane segments spans residues 373-393 (FFGN…ALFF), 447-467 (WPVA…YITI), 492-512 (LFGL…WPLI), and 538-558 (WMPL…VIYW).

Belongs to the OXA1/ALB3/YidC family. Type 1 subfamily. In terms of assembly, interacts with the Sec translocase complex via SecD. Specifically interacts with transmembrane segments of nascent integral membrane proteins during membrane integration.

Its subcellular location is the cell inner membrane. Its function is as follows. Required for the insertion and/or proper folding and/or complex formation of integral membrane proteins into the membrane. Involved in integration of membrane proteins that insert both dependently and independently of the Sec translocase complex, as well as at least some lipoproteins. Aids folding of multispanning membrane proteins. The protein is Membrane protein insertase YidC of Rhizobium etli (strain CIAT 652).